Reading from the N-terminus, the 321-residue chain is Ribosomal RNA small subunit methyltransferase H (321 aa).

S-adenosyl-L-methionine contacts are provided by residues 40–42 (GGH), D60, F84, D106, and Q113.

The protein belongs to the methyltransferase superfamily. RsmH family.

Its subcellular location is the cytoplasm. It catalyses the reaction cytidine(1402) in 16S rRNA + S-adenosyl-L-methionine = N(4)-methylcytidine(1402) in 16S rRNA + S-adenosyl-L-homocysteine + H(+). Specifically methylates the N4 position of cytidine in position 1402 (C1402) of 16S rRNA. In Pasteurella multocida (strain Pm70), this protein is Ribosomal RNA small subunit methyltransferase H.